Reading from the N-terminus, the 237-residue chain is Nitrogen fixation regulation protein FixK (237 aa).

In terms of domain architecture, HTH crp-type spans Arg-156–Ala-229. Positions Arg-189–Thr-208 form a DNA-binding region, H-T-H motif.

In terms of biological role, b.japonicum has two FixLJ-dependent FixK homologs that are activators of the transcription of a group of genes involved in anaerobic processes such as denitrification and possibly nitrogen fixation. FixK may bind DNA at the FNR consensus binding site. The chain is Nitrogen fixation regulation protein FixK (fixK) from Bradyrhizobium diazoefficiens (strain JCM 10833 / BCRC 13528 / IAM 13628 / NBRC 14792 / USDA 110).